We begin with the raw amino-acid sequence, 191 residues long: Thymidylate kinase (191 aa).

Gly-7 to Ser-14 contacts ATP.

Belongs to the thymidylate kinase family.

The catalysed reaction is dTMP + ATP = dTDP + ADP. Functionally, phosphorylation of dTMP to form dTDP in both de novo and salvage pathways of dTTP synthesis. The chain is Thymidylate kinase from Helicobacter acinonychis (strain Sheeba).